Reading from the N-terminus, the 484-residue chain is Zinc metalloproteinase/disintegrin PMMP-2 (484 aa).

The signal sequence occupies residues 1–20 (MIQVLLVTICLAVFPYQGSS). Positions 21-190 (IILESGNVDD…KASQLNLTPL (170 aa)) are excised as a propeptide. The region spanning 197–395 (RYVKLAIVVD…YNPQCILNAP (199 aa)) is the Peptidase M12B domain. Asn239 carries an N-linked (GlcNAc...) asparagine glycan. 3 disulfide bridges follow: Cys308/Cys390, Cys352/Cys374, and Cys354/Cys357. His333 contacts Zn(2+). The active site involves Glu334. His337 and His343 together coordinate Zn(2+). Positions 396–413 (LRTDTVSTPVSGNEFLEA) are excised as a propeptide. One can recognise a Disintegrin domain in the interval 403–484 (TPVSGNEFLE…ADCPRNGLYG (82 aa)). 6 disulfide bridges follow: Cys417–Cys432, Cys419–Cys427, Cys426–Cys449, Cys440–Cys446, Cys445–Cys470, and Cys458–Cys477. The short motif at 462–464 (RGD) is the Cell attachment site element.

This sequence belongs to the venom metalloproteinase (M12B) family. P-II subfamily. P-IIa sub-subfamily. Monomer. Zn(2+) serves as cofactor. As to expression, expressed by the venom gland.

Its subcellular location is the secreted. Its function is as follows. Impairs hemostasis in the envenomed animal. In terms of biological role, inhibits platelet aggregation induced by ADP, thrombin, platelet-activating factor and collagen. Acts by inhibiting fibrinogen interaction with platelet receptors GPIIb/GPIIIa (ITGA2B/ITGB3). This chain is Zinc metalloproteinase/disintegrin PMMP-2, found in Protobothrops mucrosquamatus (Taiwan habu).